The chain runs to 251 residues: MNLISIPAFQDNYIWLLANRQKHCVIVDPGESAPVLATLAQGQYVPQAILLTHHHNDHVGGVADLRHHFPDIPVYGPQETAKKGATVIVNDGDSLTIAGQNYTIIAVPGHTLGHIAYYSSPYLFCGDTLFSAGCGRLLEGTPEQMYASIQRLAQLPDETLICCAHEYTLSNLKFAHAILPADQDIATYQQQIEQLRSKNLPSLPVKLQFERKINVFLRCNDIDLQRKIGTTSPPDSLVSVFCELRSRKDSF.

Residues H53, H55, D57, H58, H110, D127, and H165 each coordinate Zn(2+).

The protein belongs to the metallo-beta-lactamase superfamily. Glyoxalase II family. In terms of assembly, monomer. Zn(2+) serves as cofactor.

The enzyme catalyses an S-(2-hydroxyacyl)glutathione + H2O = a 2-hydroxy carboxylate + glutathione + H(+). The protein operates within secondary metabolite metabolism; methylglyoxal degradation; (R)-lactate from methylglyoxal: step 2/2. Functionally, thiolesterase that catalyzes the hydrolysis of S-D-lactoyl-glutathione to form glutathione and D-lactic acid. The sequence is that of Hydroxyacylglutathione hydrolase from Yersinia pestis.